The primary structure comprises 357 residues: Protein RecA (357 aa).

71 to 78 (GPESSGKT) contacts ATP.

It belongs to the RecA family.

It localises to the cytoplasm. Its function is as follows. Can catalyze the hydrolysis of ATP in the presence of single-stranded DNA, the ATP-dependent uptake of single-stranded DNA by duplex DNA, and the ATP-dependent hybridization of homologous single-stranded DNAs. It interacts with LexA causing its activation and leading to its autocatalytic cleavage. The sequence is that of Protein RecA from Ehrlichia canis (strain Jake).